Consider the following 177-residue polypeptide: Large ribosomal subunit protein uL6 (177 aa).

It belongs to the universal ribosomal protein uL6 family. As to quaternary structure, part of the 50S ribosomal subunit.

Functionally, this protein binds to the 23S rRNA, and is important in its secondary structure. It is located near the subunit interface in the base of the L7/L12 stalk, and near the tRNA binding site of the peptidyltransferase center. The sequence is that of Large ribosomal subunit protein uL6 from Aliivibrio salmonicida (strain LFI1238) (Vibrio salmonicida (strain LFI1238)).